Reading from the N-terminus, the 432-residue chain is Anaerobic glycerol-3-phosphate dehydrogenase subunit B (432 aa).

Belongs to the anaerobic G-3-P dehydrogenase subunit B family. In terms of assembly, composed of a catalytic GlpA/B dimer and of membrane bound GlpC. FMN is required as a cofactor.

The enzyme catalyses a quinone + sn-glycerol 3-phosphate = dihydroxyacetone phosphate + a quinol. It participates in polyol metabolism; glycerol degradation via glycerol kinase pathway; glycerone phosphate from sn-glycerol 3-phosphate (anaerobic route): step 1/1. In terms of biological role, conversion of glycerol 3-phosphate to dihydroxyacetone. Uses fumarate or nitrate as electron acceptor. This chain is Anaerobic glycerol-3-phosphate dehydrogenase subunit B (glpB), found in Haemophilus influenzae (strain ATCC 51907 / DSM 11121 / KW20 / Rd).